The following is a 468-amino-acid chain: MGRRWGFLIGFLVAVGLLGLGHGEQQPSETAAQRCFCQVSGYLDDCTCDVETIDKFNNYRLFPRLQKLLESDYFRYYKVNLKRPCPFWNDINQCGRRDCAVKPCHSDEVPDGIKSASYKYSEEANNLIEECEQAERLGAVDESLSEETQKAVLQWTKHDDSSDNFCEVDDIQSPDAEYVDLLLNPERYTGYKGPDAWKIWNVIYEENCFKPQTIKRPLNPLASGQGKSEENTFYSWLEGLCVEKRAFYRLISGLHASINVHLSARYLLQDTWLEKKWGHNITEFQQRFDGILTEGEGPRRLKNLYFLYLIELRALSKVVPFFERPDFQLFTGNKDQDAENKMLLLEILHEIKSFPLHFDENSFFAGNKKEANKLKEDFRLHFRNISRIMDCVGCLKCRLWGKLQTQGLGTALKILFSEKLIANMPESGPSYEFHLTRQEIVSLFNAFGRISTSVKELENFRNLLQNIH.

The N-terminal stretch at 1-23 is a signal peptide; the sequence is MGRRWGFLIGFLVAVGLLGLGHG. 8 disulfide bridges follow: cysteine 35/cysteine 48, cysteine 37/cysteine 46, cysteine 85/cysteine 391, cysteine 94/cysteine 99, cysteine 94/cysteine 131, cysteine 99/cysteine 104, cysteine 208/cysteine 241, and cysteine 394/cysteine 397. Residues serine 106, serine 143, and serine 145 each carry the phosphoserine modification. Residues arginine 187, threonine 189, and tryptophan 200 each contribute to the FAD site. FAD contacts are provided by serine 252 and histidine 255. N-linked (GlcNAc...) asparagine glycosylation is present at asparagine 280. Residues arginine 287 and arginine 300 each contribute to the FAD site. The N-linked (GlcNAc...) asparagine glycan is linked to asparagine 384.

It belongs to the EROs family. In terms of assembly, predominantly monomer. May function both as a monomer and a homodimer. Interacts with PDILT. Interacts with ERP44; the interaction results in retention of ERO1A in the endoplasmic reticulum. It depends on FAD as a cofactor. In terms of processing, the Cys-94/Cys-99 and Cys-394/Cys-397 disulfide bonds constitute the redox-active center. The Cys-94/Cys-99 disulfide bond may accept electron from P4HB and funnel them to the active site disulfide Cys-394/Cys-397. The regulatory Cys-99/Cys-104 disulfide bond stabilizes the other regulatory bond Cys-94/Cys-131. Post-translationally, phosphorylated on Ser-145 by FAM20C in the Golgi which increases its enzymatic activity. Phosphorylation is induced by lactation. It is also induced by hypoxia and reductive stress.

The protein localises to the endoplasmic reticulum membrane. Its subcellular location is the golgi apparatus lumen. The protein resides in the secreted. It localises to the cell projection. It is found in the dendrite. Enzyme activity is tightly regulated to prevent the accumulation of reactive oxygen species in the endoplasmic reticulum. Reversibly down-regulated by the formation of disulfide bonds between the active site Cys-94 and Cys-131, and between Cys-99 and Cys-104. Glutathione may be required to regulate its activity in the endoplasmic reticulum. In terms of biological role, oxidoreductase involved in disulfide bond formation in the endoplasmic reticulum. Efficiently reoxidizes P4HB/PDI, the enzyme catalyzing protein disulfide formation, in order to allow P4HB to sustain additional rounds of disulfide formation. Following P4HB reoxidation, passes its electrons to molecular oxygen via FAD, leading to the production of reactive oxygen species (ROS) in the cell. Required for the proper folding of immunoglobulins. Plays an important role in ER stress-induced, CHOP-dependent apoptosis by activating the inositol 1,4,5-trisphosphate receptor IP3R1. In Bos taurus (Bovine), this protein is ERO1-like protein alpha.